The primary structure comprises 457 residues: Chromosomal replication initiator protein DnaA (457 aa).

The segment at 1-81 is domain I, interacts with DnaA modulators; it reads MERDLSQLWQ…NNTDLVIKVQ (81 aa). Residues 81 to 119 form a domain II region; sequence QEGSKPAARKVVAQQEIANTPVQHSAPMPENEPQAAFRS. The interval 120–337 is domain III, AAA+ region; that stretch reads NLNQHHLFEN…GALNRVHANA (218 aa). G165, G167, K168, and T169 together coordinate ATP. The tract at residues 338–457 is domain IV, binds dsDNA; that stretch reads DFTGKAITID…WSNLIRTLSA (120 aa).

This sequence belongs to the DnaA family. In terms of assembly, oligomerizes as a right-handed, spiral filament on DNA at oriC.

Its subcellular location is the cytoplasm. Its function is as follows. Plays an essential role in the initiation and regulation of chromosomal replication. ATP-DnaA binds to the origin of replication (oriC) to initiate formation of the DNA replication initiation complex once per cell cycle. Binds the DnaA box (a 9 base pair repeat at the origin) and separates the double-stranded (ds)DNA. Forms a right-handed helical filament on oriC DNA; dsDNA binds to the exterior of the filament while single-stranded (ss)DNA is stabiized in the filament's interior. The ATP-DnaA-oriC complex binds and stabilizes one strand of the AT-rich DNA unwinding element (DUE), permitting loading of DNA polymerase. After initiation quickly degrades to an ADP-DnaA complex that is not apt for DNA replication. Binds acidic phospholipids. This chain is Chromosomal replication initiator protein DnaA, found in Mannheimia succiniciproducens (strain KCTC 0769BP / MBEL55E).